Reading from the N-terminus, the 95-residue chain is MIRSELIQKIADENPHLYQRDVERIVNTVFEEVTNAMSRGDRVELRGFGAFSVKKRDARVGRNPRTGETVHVEEKHVPFFKTGKLLRDRLNGKEE.

Belongs to the bacterial histone-like protein family. Heterodimer of an alpha and a beta chain.

Functionally, this protein is one of the two subunits of integration host factor, a specific DNA-binding protein that functions in genetic recombination as well as in transcriptional and translational control. The protein is Integration host factor subunit beta of Ruegeria sp. (strain TM1040) (Silicibacter sp.).